Here is a 134-residue protein sequence, read N- to C-terminus: Small ribosomal subunit protein uS11 (134 aa).

It belongs to the universal ribosomal protein uS11 family. In terms of assembly, part of the 30S ribosomal subunit. Interacts with proteins S7 and S18. Binds to IF-3.

Located on the platform of the 30S subunit, it bridges several disparate RNA helices of the 16S rRNA. Forms part of the Shine-Dalgarno cleft in the 70S ribosome. This Variovorax paradoxus (strain S110) protein is Small ribosomal subunit protein uS11.